A 443-amino-acid polypeptide reads, in one-letter code: Thymidine phosphorylase (443 aa).

This sequence belongs to the thymidine/pyrimidine-nucleoside phosphorylase family. Homodimer.

It catalyses the reaction thymidine + phosphate = 2-deoxy-alpha-D-ribose 1-phosphate + thymine. It participates in pyrimidine metabolism; dTMP biosynthesis via salvage pathway; dTMP from thymine: step 1/2. The enzymes which catalyze the reversible phosphorolysis of pyrimidine nucleosides are involved in the degradation of these compounds and in their utilization as carbon and energy sources, or in the rescue of pyrimidine bases for nucleotide synthesis. In Shewanella baltica (strain OS195), this protein is Thymidine phosphorylase.